The sequence spans 555 residues: MTTARPAKARNEGQWALGHREPLNANEELKKAGNPLDVRERIENIYAKQGFDSIDKTDLRGRFRWWGLYTQREQGYDGTWTGDDNIDKLEAKYFMMRVRCDGGALSAAALRTLGQISTEFARDTADISDRQNVQYHWIEVENVPEIWRRLDDVGLQTTEACGDCPRVVLGSPLAGESLDEVLDPTWAIEEIVRRYIGKPDFADLPRKYKTAISGLQDVAHEINDVAFIGVNHPEHGPGLDLWVGGGLSTNPMLAQRVGAWVPLGEVPEVWAAVTSVFRDYGYRRLRAKARLKFLIKDWGIAKFREVLETEYLKRPLIDGPAPEPVKHPIDHVGVQRLKNGLNAVGVAPIAGRVSGTILTAVADLMARAGSDRIRFTPYQKLVILDIPDALLDDLIAGLDALGLQSRPSHWRRNLMACSGIEFCKLSFAETRVRAQHLVPELERRLEDINSQLDVPITVNINGCPNSCARIQIADIGFKGQMIDDGHGGSVEGFQVHLGGHLGLDAGFGRKLRQHKVTSDELGDYIDRVVRNFVKHRSEGERFAQWVIRAEEDDLR.

The segment at 1–22 is disordered; it reads MTTARPAKARNEGQWALGHREP. The segment at residues 69–161 is a cross-link (3'-(S-cysteinyl)-tyrosine (Tyr-Cys)); the sequence is YTQREQGYDG…DVGLQTTEAC (93 aa). Positions 417, 423, 463, and 467 each coordinate [4Fe-4S] cluster. Cys-467 contacts siroheme.

The protein belongs to the nitrite and sulfite reductase 4Fe-4S domain family. Monomer. Siroheme serves as cofactor. It depends on [4Fe-4S] cluster as a cofactor.

The catalysed reaction is hydrogen sulfide + 6 oxidized [2Fe-2S]-[ferredoxin] + 3 H2O = sulfite + 6 reduced [2Fe-2S]-[ferredoxin] + 7 H(+). Functionally, catalyzes the reduction of sulfite to sulfide, a step in the biosynthesis of sulfur-containing amino acids and cofactors. The sequence is that of Sulfite reductase [ferredoxin] (sir) from Mycobacterium bovis (strain ATCC BAA-935 / AF2122/97).